A 271-amino-acid polypeptide reads, in one-letter code: Bifunctional protein FolD (271 aa).

Residues 154–156, serine 181, and isoleucine 222 contribute to the NADP(+) site; that span reads GRS.

The protein belongs to the tetrahydrofolate dehydrogenase/cyclohydrolase family. As to quaternary structure, homodimer.

It carries out the reaction (6R)-5,10-methylene-5,6,7,8-tetrahydrofolate + NADP(+) = (6R)-5,10-methenyltetrahydrofolate + NADPH. The catalysed reaction is (6R)-5,10-methenyltetrahydrofolate + H2O = (6R)-10-formyltetrahydrofolate + H(+). It functions in the pathway one-carbon metabolism; tetrahydrofolate interconversion. Functionally, catalyzes the oxidation of 5,10-methylenetetrahydrofolate to 5,10-methenyltetrahydrofolate and then the hydrolysis of 5,10-methenyltetrahydrofolate to 10-formyltetrahydrofolate. In Thermotoga sp. (strain RQ2), this protein is Bifunctional protein FolD.